A 605-amino-acid chain; its full sequence is Adaptin medium chain homolog APM2 (605 aa).

Residues 150 to 196 (EEWSPGEESSSSSGSDSDSEYSNTNKRKDKKKKRKKKKGTKGKSVGK) form a disordered region. Positions 155–171 (GEESSSSSGSDSDSEYS) are enriched in low complexity. Over residues 174 to 196 (NKRKDKKKKRKKKKGTKGKSVGK) the composition is skewed to basic residues. The MHD domain occupies 269–604 (KNEFFLDVIE…TVSDEEYAYI (336 aa)).

Belongs to the adaptor complexes medium subunit family. As to quaternary structure, component of the AP-1R complex composed of at least APM2, APL4 and APS1. Interacts with MIL1. Interacts with APL2.

The protein localises to the golgi apparatus membrane. The protein resides in the early endosome membrane. Its subcellular location is the cytoplasmic vesicle. It is found in the clathrin-coated vesicle membrane. Its function is as follows. Component of the AP-1-related (AP-1R) complex, an adapter protein complex that mediates of cargo protein sorting in clathrin-coated vesicles. AP-1R has a specific role in SNARE SNC1 sorting. In contrast to the APM1-containing AP-1 complex, AP-1R is incapable of sorting CHS3. The chain is Adaptin medium chain homolog APM2 (APM2) from Saccharomyces cerevisiae (strain ATCC 204508 / S288c) (Baker's yeast).